Here is a 243-residue protein sequence, read N- to C-terminus: Phosphoribosyl isomerase A (243 aa).

D9 serves as the catalytic Proton acceptor. The Proton donor role is filled by D128.

It belongs to the HisA/HisF family.

It localises to the cytoplasm. The catalysed reaction is 1-(5-phospho-beta-D-ribosyl)-5-[(5-phospho-beta-D-ribosylamino)methylideneamino]imidazole-4-carboxamide = 5-[(5-phospho-1-deoxy-D-ribulos-1-ylimino)methylamino]-1-(5-phospho-beta-D-ribosyl)imidazole-4-carboxamide. The enzyme catalyses N-(5-phospho-beta-D-ribosyl)anthranilate = 1-(2-carboxyphenylamino)-1-deoxy-D-ribulose 5-phosphate. Its pathway is amino-acid biosynthesis; L-histidine biosynthesis; L-histidine from 5-phospho-alpha-D-ribose 1-diphosphate: step 4/9. It functions in the pathway amino-acid biosynthesis; L-tryptophan biosynthesis; L-tryptophan from chorismate: step 3/5. Its function is as follows. Involved in both the histidine and tryptophan biosynthetic pathways. In Mycobacterium avium (strain 104), this protein is Phosphoribosyl isomerase A.